Consider the following 202-residue polypeptide: Probable septum site-determining protein MinC (202 aa).

This sequence belongs to the MinC family. Interacts with MinD and FtsZ.

Functionally, cell division inhibitor that blocks the formation of polar Z ring septums. Rapidly oscillates between the poles of the cell to destabilize FtsZ filaments that have formed before they mature into polar Z rings. Prevents FtsZ polymerization. The sequence is that of Probable septum site-determining protein MinC from Sulfurihydrogenibium sp. (strain YO3AOP1).